Consider the following 509-residue polypeptide: 2,3-bisphosphoglycerate-independent phosphoglycerate mutase (509 aa).

D11 is a binding site for Mn(2+). The residue at position 35 (Y35) is a Phosphotyrosine. Residue S61 coordinates Mn(2+). Catalysis depends on S61, which acts as the Phosphoserine intermediate. Substrate contacts are provided by residues H122, 152 to 153 (RD), R184, R190, 260 to 263 (RPDR), and K335. D402, H406, D443, H444, and H461 together coordinate Mn(2+).

It belongs to the BPG-independent phosphoglycerate mutase family. In terms of assembly, monomer. Mn(2+) is required as a cofactor.

It catalyses the reaction (2R)-2-phosphoglycerate = (2R)-3-phosphoglycerate. It participates in carbohydrate degradation; glycolysis; pyruvate from D-glyceraldehyde 3-phosphate: step 3/5. Functionally, essential for rapid growth and for sporulation. Catalyzes the interconversion of 2-phosphoglycerate and 3-phosphoglycerate. This chain is 2,3-bisphosphoglycerate-independent phosphoglycerate mutase, found in Bacillus anthracis.